The following is a 465-amino-acid chain: Fumarate hydratase class II (465 aa).

Substrate contacts are provided by residues 99 to 101, 130 to 133, 140 to 142, and threonine 188; these read SGT, HPND, and STN. Residue histidine 189 is the Proton donor/acceptor of the active site. The active site involves serine 319. Substrate is bound by residues serine 320 and 325–327; that span reads KVN.

Belongs to the class-II fumarase/aspartase family. Fumarase subfamily. In terms of assembly, homotetramer.

It is found in the cytoplasm. The catalysed reaction is (S)-malate = fumarate + H2O. It functions in the pathway carbohydrate metabolism; tricarboxylic acid cycle; (S)-malate from fumarate: step 1/1. Involved in the TCA cycle. Catalyzes the stereospecific interconversion of fumarate to L-malate. The polypeptide is Fumarate hydratase class II (Prochlorococcus marinus (strain SARG / CCMP1375 / SS120)).